A 1939-amino-acid chain; its full sequence is Myosin-1 (1939 aa).

The region spanning Asp-33 to Pro-82 is the Myosin N-terminal SH3-like domain. Thr-64 and Thr-69 each carry phosphothreonine. Residues Asp-86–Asp-782 enclose the Myosin motor domain. Lys-130 is subject to N6,N6,N6-trimethyllysine. Gly-179 to Thr-186 serves as a coordination point for ATP. At Tyr-389 the chain carries Phosphotyrosine. The residue at position 392 (Ser-392) is a Phosphoserine. A Phosphothreonine modification is found at Thr-419. Residue Tyr-424 is modified to Phosphotyrosine. Ser-625 is subject to Phosphoserine. The segment at Leu-659–Glu-681 is actin-binding. Residue His-757 is modified to Pros-methylhistidine. An actin-binding region spans residues Lys-761–Gly-775. One can recognise an IQ domain in the interval Leu-785 to Ser-814. The stretch at Leu-843–Glu-1939 forms a coiled coil. Ser-1092 and Ser-1096 each carry phosphoserine. Disordered stretches follow at residues Glu-1125–Leu-1147 and Arg-1153–Glu-1172. The segment covering Ala-1128 to Leu-1147 has biased composition (basic and acidic residues). Phosphoserine is present on residues Ser-1162 and Ser-1237. Thr-1241 is modified (phosphothreonine). Ser-1243 is modified (phosphoserine). The residue at position 1255 (Thr-1255) is a Phosphothreonine. Ser-1261 carries the post-translational modification Phosphoserine. Residues Thr-1265 and Thr-1286 each carry the phosphothreonine modification. Residues Ser-1288, Ser-1292, Ser-1303, and Ser-1306 each carry the phosphoserine modification. The residue at position 1464 (Tyr-1464) is a Phosphotyrosine. Phosphothreonine is present on Thr-1467. Phosphoserine is present on Ser-1474. Position 1492 is a phosphotyrosine (Tyr-1492). Position 1495 is a phosphoserine (Ser-1495). Phosphothreonine is present on Thr-1501. At Ser-1514 the chain carries Phosphoserine. Position 1517 is a phosphothreonine (Thr-1517). Ser-1554, Ser-1574, Ser-1600, Ser-1603, Ser-1714, and Ser-1726 each carry phosphoserine. Thr-1730 and Thr-1736 each carry phosphothreonine. Residue Ser-1739 is modified to Phosphoserine.

It belongs to the TRAFAC class myosin-kinesin ATPase superfamily. Myosin family. As to quaternary structure, muscle myosin is a hexameric protein that consists of 2 heavy chain subunits (MHC), 2 alkali light chain subunits (MLC) and 2 regulatory light chain subunits (MLC-2). Interacts with SLC26A5.

The protein localises to the cytoplasm. Its subcellular location is the myofibril. Required for normal hearing. It plays a role in cochlear amplification of auditory stimuli, likely through the positive regulation of prestin (SLC26A5) activity and outer hair cell (OHC) electromotility. The chain is Myosin-1 (MYH1) from Canis lupus familiaris (Dog).